The sequence spans 362 residues: Peptide chain release factor 1 (362 aa).

The residue at position 232 (Gln-232) is an N5-methylglutamine.

Belongs to the prokaryotic/mitochondrial release factor family. In terms of processing, methylated by PrmC. Methylation increases the termination efficiency of RF1.

Its subcellular location is the cytoplasm. Peptide chain release factor 1 directs the termination of translation in response to the peptide chain termination codons UAG and UAA. The polypeptide is Peptide chain release factor 1 (Myxococcus xanthus).